A 421-amino-acid chain; its full sequence is General transcription factor IIH subunit 2 (421 aa).

Positions 1–26 (MSNQRKRSNDEREEEDDEDAEGIGEW) are disordered. A compositionally biased stretch (acidic residues) spans 11-24 (EREEEDDEDAEGIG). In terms of domain architecture, VWFA spans 83 to 272 (YLYIVIDFSR…IAEFAIANLI (190 aa)). Residues 362 to 408 (CFGCQQSLIGAGNKPVPCVTCRKCKHYFCLDCDIYIHESLHNCPGCE) form an RING-type zinc finger.

The protein belongs to the GTF2H2 family. As to quaternary structure, component of the 7-subunit TFIIH core complex composed of XPB, XPD, TFB1/GTF2H1, GTF2H2/P44, TFB4/GTF2H3, TFB2/GTF2H4 and TFB5/GTF2H5, which is active in NER. The core complex associates with the 3-subunit CDK-activating kinase (CAK) module composed of CYCH1/cyclin H1, CDKD and MAT1/At4g30820 to form the 10-subunit holoenzyme (holo-TFIIH) active in transcription. Interacts with XPD.

The protein localises to the nucleus. In terms of biological role, component of the general transcription and DNA repair factor IIH (TFIIH) core complex, which is involved in general and transcription-coupled nucleotide excision repair (NER) of damaged DNA and, when complexed to CAK, in RNA transcription by RNA polymerase II. In NER, TFIIH acts by opening DNA around the lesion to allow the excision of the damaged oligonucleotide and its replacement by a new DNA fragment. In transcription, TFIIH has an essential role in transcription initiation. When the pre-initiation complex (PIC) has been established, TFIIH is required for promoter opening and promoter escape. Phosphorylation of the C-terminal tail (CTD) of the largest subunit of RNA polymerase II by the kinase module CAK controls the initiation of transcription. Can restore UV resistance in the NER-deficient ssl1-1 yeast mutant. In Arabidopsis thaliana (Mouse-ear cress), this protein is General transcription factor IIH subunit 2.